The primary structure comprises 947 residues: Protein NETWORKED 2A (947 aa).

An NAB domain is found at tyrosine 10–leucine 90. The disordered stretch occupies residues valine 105–histidine 131. Residues leucine 109 to aspartate 118 are compositionally biased toward acidic residues. 2 coiled-coil regions span residues lysine 348–valine 454 and valine 568–aspartate 619. Basic and acidic residues-rich tracts occupy residues leucine 618 to histidine 627 and leucine 635 to threonine 644. Disordered stretches follow at residues leucine 618 to serine 675, arginine 743 to serine 763, and lysine 911 to glutamate 947. Residues valine 645–histidine 660 show a composition bias toward polar residues. Basic and acidic residues predominate over residues glutamine 662–serine 675. A coiled-coil region spans residues valine 722 to arginine 809. Composition is skewed to polar residues over residues glutamine 749–valine 761 and glutamine 915–serine 927.

This sequence belongs to the NET family. As to expression, expressed specifically in pollen.

Its subcellular location is the cell membrane. Its function is as follows. Plant-specific actin binding protein. Associates with F-actin at the plasma membrane in growing pollen tubes. May be part of a membrane-cytoskeletal adapter complex. The polypeptide is Protein NETWORKED 2A (Arabidopsis thaliana (Mouse-ear cress)).